The chain runs to 105 residues: MKFYIVLLALAAFAMAEADPNLEARAGCSQKGKYCNGGTFLCCPGQGSCKGNQIAKKKYSASEAPSTEGVQRLLLVTGYALECLGCLFSQTPGYSGSVLPLLNSH.

The N-terminal stretch at 1–18 (MKFYIVLLALAAFAMAEA) is a signal peptide. 3 cysteine pairs are disulfide-bonded: Cys35-Cys86, Cys42-Cys83, and Cys43-Cys49.

It is found in the secreted. It localises to the cell wall. Its function is as follows. Aerial growth, conidiation, and dispersal of filamentous fungi in the environment rely upon a capability of their secreting small amphipathic proteins called hydrophobins (HPBs) with low sequence identity. Class I can self-assemble into an outermost layer of rodlet bundles on aerial cell surfaces, conferring cellular hydrophobicity that supports fungal growth, development and dispersal; whereas Class II form highly ordered films at water-air interfaces through intermolecular interactions but contribute nothing to the rodlet structure. In P.expansum, hydrophobins contribute to germination, tolerance to cold stress and mycotoxins patulin and citrinin production. This chain is Unclassified hydrophobin D, found in Penicillium expansum (Blue mold rot fungus).